The sequence spans 156 residues: Phospholipase A2 A2-hormotoxin-Apt1a (156 aa).

Positions 1-19 are cleaved as a signal peptide; the sequence is MQLYTYFFTFSLVLILALA. The propeptide occupies 20–35; that stretch reads DQENKSLDFTQEGGIA. 5 disulfides stabilise this stretch: Cys-62-Cys-156, Cys-64-Cys-80, Cys-79-Cys-138, Cys-86-Cys-131, and Cys-115-Cys-129. 2 residues coordinate Ca(2+): Gly-65 and Gly-67. Residue His-83 is part of the active site. Asp-84 contributes to the Ca(2+) binding site. Asp-132 is a catalytic residue.

This sequence belongs to the phospholipase A2 family. Requires Ca(2+) as cofactor.

The protein localises to the secreted. It localises to the nematocyst. It catalyses the reaction a 1,2-diacyl-sn-glycero-3-phosphocholine + H2O = a 1-acyl-sn-glycero-3-phosphocholine + a fatty acid + H(+). Its function is as follows. Sea anemone phospholipase A2 (PLA2) that may have a role both in defense and in digestion, since its expression and enzymatic activity were found both in the acontia (defensive organs) and tentacles. PLA2 catalyzes the calcium-dependent hydrolysis of the 2-acyl groups in 3-sn-phosphoglycerides. The sequence is that of Phospholipase A2 A2-hormotoxin-Apt1a from Adamsia palliata (Cloak anemone).